Consider the following 646-residue polypeptide: Elongation factor 4 (646 aa).

A tr-type G domain is found at 42-227; it reads AQIRNFCIIA…EVVRRVPHPQ (186 aa). GTP is bound by residues 54 to 59 and 174 to 177; these read DHGKST and NKID.

The protein belongs to the TRAFAC class translation factor GTPase superfamily. Classic translation factor GTPase family. LepA subfamily.

It is found in the cell membrane. The catalysed reaction is GTP + H2O = GDP + phosphate + H(+). Required for accurate and efficient protein synthesis under certain stress conditions. May act as a fidelity factor of the translation reaction, by catalyzing a one-codon backward translocation of tRNAs on improperly translocated ribosomes. Back-translocation proceeds from a post-translocation (POST) complex to a pre-translocation (PRE) complex, thus giving elongation factor G a second chance to translocate the tRNAs correctly. Binds to ribosomes in a GTP-dependent manner. The chain is Elongation factor 4 from Mycobacterium leprae (strain Br4923).